The chain runs to 746 residues: Polyribonucleotide nucleotidyltransferase (746 aa).

2 residues coordinate Mg(2+): D519 and D525. One can recognise a KH domain in the interval 585–644 (PRVIAVKIPVDKIGEVIGPKGKMINQIQEDTGADISIEDDGTVYIGATNGPSADAARSAI). In terms of domain architecture, S1 motif spans 656–728 (GERYLGTVVK…DRGKLSLSPV (73 aa)).

The protein belongs to the polyribonucleotide nucleotidyltransferase family. Mg(2+) is required as a cofactor.

It is found in the cytoplasm. It catalyses the reaction RNA(n+1) + phosphate = RNA(n) + a ribonucleoside 5'-diphosphate. Functionally, involved in mRNA degradation. Catalyzes the phosphorolysis of single-stranded polyribonucleotides processively in the 3'- to 5'-direction. The polypeptide is Polyribonucleotide nucleotidyltransferase (Arthrobacter sp. (strain FB24)).